Consider the following 357-residue polypeptide: UDP-N-acetylglucosamine--N-acetylmuramyl-(pentapeptide) pyrophosphoryl-undecaprenol N-acetylglucosamine transferase (357 aa).

UDP-N-acetyl-alpha-D-glucosamine-binding positions include 12–14 (TGG), N124, R163, S189, I243, 262–267 (ALTVSE), and Q288.

It belongs to the glycosyltransferase 28 family. MurG subfamily.

It is found in the cell inner membrane. It catalyses the reaction di-trans,octa-cis-undecaprenyl diphospho-N-acetyl-alpha-D-muramoyl-L-alanyl-D-glutamyl-meso-2,6-diaminopimeloyl-D-alanyl-D-alanine + UDP-N-acetyl-alpha-D-glucosamine = di-trans,octa-cis-undecaprenyl diphospho-[N-acetyl-alpha-D-glucosaminyl-(1-&gt;4)]-N-acetyl-alpha-D-muramoyl-L-alanyl-D-glutamyl-meso-2,6-diaminopimeloyl-D-alanyl-D-alanine + UDP + H(+). It functions in the pathway cell wall biogenesis; peptidoglycan biosynthesis. Functionally, cell wall formation. Catalyzes the transfer of a GlcNAc subunit on undecaprenyl-pyrophosphoryl-MurNAc-pentapeptide (lipid intermediate I) to form undecaprenyl-pyrophosphoryl-MurNAc-(pentapeptide)GlcNAc (lipid intermediate II). This Pseudomonas paraeruginosa (strain DSM 24068 / PA7) (Pseudomonas aeruginosa (strain PA7)) protein is UDP-N-acetylglucosamine--N-acetylmuramyl-(pentapeptide) pyrophosphoryl-undecaprenol N-acetylglucosamine transferase.